A 215-amino-acid chain; its full sequence is Transcription elongation factor A protein-like 4 (215 aa).

Residue Met1 is modified to N-acetylmethionine. Positions 1–133 are disordered; it reads MEKLYSENEG…RKAKRKTNKG (133 aa). Ser6, Ser88, and Ser102 each carry phosphoserine. Over residues 25-102 the composition is skewed to basic and acidic residues; that stretch reads QDERKPEVTC…KPEIEGKPES (78 aa).

The protein belongs to the TFS-II family. TFA subfamily.

Its subcellular location is the nucleus. May be involved in transcriptional regulation. The protein is Transcription elongation factor A protein-like 4 (TCEAL4) of Homo sapiens (Human).